The chain runs to 1212 residues: uncharacterized protein (1212 aa).

A disordered region spans residues 783-802; the sequence is TRQDASGGSSSGTKKGEKLQ.

This is an uncharacterized protein from Human herpesvirus 6B (strain Z29) (HHV-6 variant B).